A 430-amino-acid chain; its full sequence is 3-phosphoshikimate 1-carboxyvinyltransferase (430 aa).

Residues K25, S26, and R30 each contribute to the 3-phosphoshikimate site. Position 25 (K25) interacts with phosphoenolpyruvate. Phosphoenolpyruvate is bound by residues G97 and R125. S170, Q172, D318, and K345 together coordinate 3-phosphoshikimate. Residue Q172 participates in phosphoenolpyruvate binding. D318 functions as the Proton acceptor in the catalytic mechanism. The phosphoenolpyruvate site is built by R349 and R391.

This sequence belongs to the EPSP synthase family. As to quaternary structure, monomer.

Its subcellular location is the cytoplasm. It catalyses the reaction 3-phosphoshikimate + phosphoenolpyruvate = 5-O-(1-carboxyvinyl)-3-phosphoshikimate + phosphate. Its pathway is metabolic intermediate biosynthesis; chorismate biosynthesis; chorismate from D-erythrose 4-phosphate and phosphoenolpyruvate: step 6/7. Functionally, catalyzes the transfer of the enolpyruvyl moiety of phosphoenolpyruvate (PEP) to the 5-hydroxyl of shikimate-3-phosphate (S3P) to produce enolpyruvyl shikimate-3-phosphate and inorganic phosphate. In Shouchella clausii (strain KSM-K16) (Alkalihalobacillus clausii), this protein is 3-phosphoshikimate 1-carboxyvinyltransferase.